A 1124-amino-acid polypeptide reads, in one-letter code: MADGPRCKRRKQANPRRNNVTNYNTVVETNSDSDDEDKLHIVEEESVTDAADCEGVPEDDLPTDQTVLPGRSSEREGNAKNCWEDDRKEGQEILGPEAQADEAGCTVKDDECESDAENEQNHDPNVEEFLQQQDTAVIFPEAPEEDQRQGTPEASGHDENGTPDAFSQLLTCPYCDRGYKRFTSLKEHIKYRHEKNEDNFSCSLCSYTFAYRTQLERHMTSHKSGRDQRHVTQSGCNRKFKCTECGKAFKYKHHLKEHLRIHSGEKPYECPNCKKRFSHSGSYSSHISSKKCISLIPVNGRPRTGLKTSQCSSPSLSASPGSPTRPQIRQKIENKPLQEQLSVNQIKTEPVDYEFKPIVVASGINCSTPLQNGVFTGGGPLQATSSPQGMVQAVVLPTVGLVSPISINLSDIQNVLKVAVDGNVIRQVLENNQANLASKEQETINASPIQQGGHSVISAISLPLVDQDGTTKIIINYSLEQPSQLQVVPQNLKKENPVATNSCKSEKLPEDLTVKSEKDKSFEGGVNDSTCLLCDDCPGDINALPELKHYDLKQPTQPPPLPAAEAEKPESSVSSATGDGNLSPSQPPLKNLLSLLKAYYALNAQPSAEELSKIADSVNLPLDVVKKWFEKMQAGQISVQSSEPSSPEPGKVNIPAKNNDQPQSANANEPQDSTVNLQSPLKMTNSPVLPVGSTTNGSRSSTPSPSPLNLSSSRNTQGYLYTAEGAQEEPQVEPLDLSLPKQQGELLERSTITSVYQNSVYSVQEEPLNLSCAKKEPQKDSCVTDSEPVVNVIPPSANPINIAIPTVTAQLPTIVAIADQNSVPCLRALAANKQTILIPQVAYTYSTTVSPAVQEPPLKVIQPNGNQDERQDTSSEGVSNVEDQNDSDSTPPKKKMRKTENGMYACDLCDKIFQKSSSLLRHKYEHTGKRPHECGICKKAFKHKHHLIEHMRLHSGEKPYQCDKCGKRFSHSGSYSQHMNHRYSYCKREAEERDSTEQEEAGPEILSNEHVGARASPSQGDSDERESLTREEDEDSEKEEEEEDKEMEELQEEKECEKPQGDEEEEEEEEEVEEEEVEEAENEGEEAKTEGLMKDDRAESQASSLGQKVGESSEQVSEEKTNEA.

Disordered regions lie at residues 1–124 (MADG…NHDP) and 142–163 (APEEDQRQGTPEASGHDENGTP). Over residues 18-30 (NNVTNYNTVVETN) the composition is skewed to low complexity. Residues serine 31 and serine 33 each carry the phosphoserine modification. A compositionally biased stretch (acidic residues) spans 44–62 (EESVTDAADCEGVPEDDLP). The span at 72 to 91 (SSEREGNAKNCWEDDRKEGQ) shows a compositional bias: basic and acidic residues. Residues 170–193 (LTCPYCDRGYKRFTSLKEHIKYRH) form a C2H2-type 1 zinc finger. Residues lysine 186 and lysine 195 each participate in a glycyl lysine isopeptide (Lys-Gly) (interchain with G-Cter in SUMO2) cross-link. C2H2-type zinc fingers lie at residues 200-222 (FSCSLCSYTFAYRTQLERHMTSH) and 240-262 (FKCTECGKAFKYKHHLKEHLRIH). Residues 268-292 (YECPNCKKRFSHSGSYSSHISSKKC) form a C2H2-type 4; atypical zinc finger. The segment at 304-327 (TGLKTSQCSSPSLSASPGSPTRPQ) is disordered. Lysine 307 is covalently cross-linked (Glycyl lysine isopeptide (Lys-Gly) (interchain with G-Cter in SUMO2)). Low complexity predominate over residues 309–322 (SQCSSPSLSASPGS). 2 positions are modified to phosphoserine: serine 313 and serine 322. Glycyl lysine isopeptide (Lys-Gly) (interchain with G-Cter in SUMO2) cross-links involve residues lysine 331 and lysine 335. Lysine 347 participates in a covalent cross-link: Glycyl lysine isopeptide (Lys-Gly) (interchain with G-Cter in SUMO); alternate. A Glycyl lysine isopeptide (Lys-Gly) (interchain with G-Cter in SUMO2); alternate cross-link involves residue lysine 347. Glycyl lysine isopeptide (Lys-Gly) (interchain with G-Cter in SUMO2) cross-links involve residues lysine 439, lysine 493, lysine 504, lysine 515, lysine 548, and lysine 553. 2 disordered regions span residues 551–586 (DLKQPTQPPPLPAAEAEKPESSVSSATGDGNLSPSQ) and 636–714 (QISV…SSSR). The segment at residues 581–640 (NLSPSQPPLKNLLSLLKAYYALNAQPSAEELSKIADSVNLPLDVVKKWFEKMQAGQISVQ) is a DNA-binding region (homeobox; atypical). Residues serine 642, serine 679, serine 686, serine 693, and serine 700 each carry the phosphoserine modification. Residues 656–687 (AKNNDQPQSANANEPQDSTVNLQSPLKMTNSP) show a composition bias toward polar residues. Low complexity predominate over residues 692–714 (GSTTNGSRSSTPSPSPLNLSSSR). Threonine 702 bears the Phosphothreonine mark. Phosphoserine is present on serine 704. Residue lysine 774 forms a Glycyl lysine isopeptide (Lys-Gly) (interchain with G-Cter in SUMO); alternate linkage. Lysine 774 is covalently cross-linked (Glycyl lysine isopeptide (Lys-Gly) (interchain with G-Cter in SUMO2); alternate). Residues 856 to 898 (PPLKVIQPNGNQDERQDTSSEGVSNVEDQNDSDSTPPKKKMRK) form a disordered region. A compositionally biased stretch (polar residues) spans 874–890 (SSEGVSNVEDQNDSDST). C2H2-type zinc fingers lie at residues 904-926 (YACDLCDKIFQKSSSLLRHKYEH) and 932-954 (HECGICKKAFKHKHHLIEHMRLH). A C2H2-type 7; atypical zinc finger spans residues 960–981 (YQCDKCGKRFSHSGSYSQHMNH). The tract at residues 989–1124 (EAEERDSTEQ…QVSEEKTNEA (136 aa)) is disordered. Acidic residues-rich tracts occupy residues 1031-1052 (EEDEDSEKEEEEEDKEMEELQE) and 1062-1084 (DEEEEEEEEEVEEEEVEEAENEG). Residues 1085 to 1099 (EEAKTEGLMKDDRAE) show a composition bias toward basic and acidic residues. Polar residues predominate over residues 1100 to 1115 (SQASSLGQKVGESSEQ).

Belongs to the delta-EF1/ZFH-1 C2H2-type zinc-finger family. In terms of assembly, interacts (via N-terminus) with SMARCA4/BRG1. Post-translationally, ubiquitinated, leading to degradation in a proteasome-dependent manner. Deubiquitinated by USP51, leading to stabilization. In terms of tissue distribution, colocalizes with SMARCA4/BRG1 in E-cadherin-negative cells from established lines, and stroma of normal colon as well as in de-differentiated epithelial cells at the invasion front of colorectal carcinomas (at protein level). Expressed in heart and skeletal muscle, but not in liver, spleen, or pancreas.

The protein resides in the nucleus. In terms of biological role, acts as a transcriptional repressor. Inhibits interleukin-2 (IL-2) gene expression. Enhances or represses the promoter activity of the ATP1A1 gene depending on the quantity of cDNA and on the cell type. Represses E-cadherin promoter and induces an epithelial-mesenchymal transition (EMT) by recruiting SMARCA4/BRG1. Represses BCL6 transcription in the presence of the corepressor CTBP1. Positively regulates neuronal differentiation. Represses RCOR1 transcription activation during neurogenesis. Represses transcription by binding to the E box (5'-CANNTG-3'). In the absence of TGFB1, acts as a repressor of COL1A2 transcription via binding to the E-box in the upstream enhancer region. This chain is Zinc finger E-box-binding homeobox 1, found in Homo sapiens (Human).